The chain runs to 63 residues: Large ribosomal subunit protein bL28 (63 aa).

It belongs to the bacterial ribosomal protein bL28 family.

The chain is Large ribosomal subunit protein bL28 from Treponema denticola (strain ATCC 35405 / DSM 14222 / CIP 103919 / JCM 8153 / KCTC 15104).